Consider the following 1110-residue polypeptide: Sex-determining transformer protein 1 (1110 aa).

2 disordered regions span residues 1 to 103 and 170 to 202; these read MMAP…AQQS and TINGKRVGRPPGTFKRPQNNAANSSNSGNDSDM. The span at 44 to 61 shows a compositional bias: basic and acidic residues; the sequence is GSEDKQPGGGDVKTENDP. Residues 65–90 show a composition bias toward polar residues; it reads GLGSATSNFIQSSVPPSHQTLSNPLQ. Positions 188–201 are enriched in low complexity; that stretch reads NNAANSSNSGNDSD. Residues 208–233 form a C2H2-type 1; low DNA-binding affinity zinc finger; sequence LTCRWKSCNSSFQTLKALVDHVQESH. The C2H2-type 2; low DNA-binding affinity zinc-finger motif lies at 244–270; that stretch reads WRCEWEGCDRNETFKALYMLIVHVRRH. C2H2-type zinc fingers lie at residues 276–300, 306–331, and 337–362; these read NKCEYPGCGKEYSRLENLKTHRRTH, YKCEFADCEKAFSNASDRAKHQNRTH, and YSCQIPQCTKSYTDPSSLRKHIKAVH. Disordered stretches follow at residues 363–397, 594–682, 875–895, and 1057–1110; these read GDDEYEKAKKSRPANYSNRRRPDHRLAPPTGAMSH, EVEP…GSGE, RNVGGFGDEEDRNNRGHDQDR, and QEQP…RHQF. Low complexity predominate over residues 597-606; that stretch reads PLQQQQQQEP. The span at 641-652 shows a compositional bias: gly residues; that stretch reads GNNGDGGFGGSG. A compositionally biased stretch (polar residues) spans 669–678; it reads PISQNGSRAS. Residues 886–895 show a composition bias toward basic and acidic residues; the sequence is RNNRGHDQDR. Residues 1057–1066 show a composition bias toward polar residues; sequence QEQPTSSFSS. Residues 1076–1086 are compositionally biased toward pro residues; that stretch reads ALPPPPPPPAP. A compositionally biased stretch (basic and acidic residues) spans 1092–1103; that stretch reads SADNKDDSENIP.

The protein belongs to the GLI C2H2-type zinc-finger protein family. As to quaternary structure, interacts with the MX regulatory domain of tra-2. In terms of tissue distribution, expressed in intestine and gonads (at protein level).

It is found in the cytoplasm. It localises to the nucleus. Functionally, plays a major role in controlling sexual phenotype. Terminal global regulator in a well-characterized cascade of sex-determining genes. Promotes female development. Interacts with tra-2 to promote spermatogenesis. Promotes spermatogenesis through the Tip60 HAT complex and by regulating the expression of genes, such as fog-3, required for male development. Association with chromatin and at the fog-3 promoter requires wdr-5.1, and may also require wdr-5.2. With trr-1, activates the fog-3 gene to determine sperm/oocyte cell fate. In hermaphrodites, binds to an intronic regulatory site in the ceh-30 gene, preventing ceh-30 transcription and thereby preventing survival of the CEM (cephalic male) sensory neurons. Represses the expression of the transcription factor dmd-3 in hermaphrodites to govern the timing and extent of male tail tip morphogenesis. Plays a role in controlling the sex-specific differentiation of PHC sensory neurons and represses the development of male-specific morphological features. The protein is Sex-determining transformer protein 1 of Caenorhabditis elegans.